A 141-amino-acid polypeptide reads, in one-letter code: uncharacterized protein (141 aa).

A compositionally biased stretch (basic and acidic residues) spans 1–17; that stretch reads MNKSESENDSEYHKEYS. The interval 1–24 is disordered; sequence MNKSESENDSEYHKEYSESSDPED. Residues 52 to 115 adopt a coiled-coil conformation; sequence IQNLNNNVKE…QMLFEKMRDM (64 aa).

This is an uncharacterized protein from Acanthamoeba polyphaga (Amoeba).